A 370-amino-acid chain; its full sequence is MPTPAHLSKDPRYFDFRAARRVPETHAWPGLHDHPVVDGSGAGGGPDAVPVVDMRDPCAAEAVALAAQDWGAFLLEGHGVPLELLARVEAAIAGMFALPASEKMRAVRRPGDSCGYGSPPISSFFSKCMWSEGYTFSPANLRSDLRKLWPKAGHDYRHFCAVMEEFHREMRALADKLLELFLVALGLTGEQVAAVESEQKIAETMTATMHLNWYPKCPDPKRALGLIAHTDSGFFTFVLQSLVPGLQLFRHGPDRWVTVPAVPGAMVVNVGDLFQILTNGRFHSVYHRAVVNRDSDRISLGYFLGPPAHVKVAPLREALAGTPAAYRAVTWPEYMGVRKKAFTTGASALKMVAISTDNDAANHTDDLISS.

The 102-residue stretch at 205–306 (MTATMHLNWY…RISLGYFLGP (102 aa)) folds into the Fe2OG dioxygenase domain. Residues His-229, Asp-231, and His-287 each coordinate Fe cation. Arg-297 is a catalytic residue.

This sequence belongs to the iron/ascorbate-dependent oxidoreductase family. GA3OX subfamily. Requires L-ascorbate as cofactor. Fe cation is required as a cofactor.

It catalyses the reaction gibberellin A20 + 2-oxoglutarate + O2 = gibberellin A1 + succinate + CO2. Its function is as follows. Converts the inactive gibberellin precursors GA9 and GA20 in the bioactives gibberellins GA4 and GA1. This is Gibberellin 3-beta-dioxygenase 2-2 (GA3ox2-2) from Triticum aestivum (Wheat).